Reading from the N-terminus, the 479-residue chain is Sulfate adenylyltransferase subunit 1 (479 aa).

The 215-residue stretch at 25 to 239 (KSLLRFLTCG…EVLETVDIQR (215 aa)) folds into the tr-type G domain. Positions 34-41 (GSVDDGKS) are G1. GTP is bound at residue 34–41 (GSVDDGKS). The segment at 92 to 96 (GITID) is G2. The G3 stretch occupies residues 113 to 116 (DTPG). GTP contacts are provided by residues 113–117 (DTPGH) and 168–171 (NKMD). The tract at residues 168–171 (NKMD) is G4. The segment at 206–208 (SAL) is G5.

Belongs to the TRAFAC class translation factor GTPase superfamily. Classic translation factor GTPase family. CysN/NodQ subfamily. Heterodimer composed of CysD, the smaller subunit, and CysN.

It carries out the reaction sulfate + ATP + H(+) = adenosine 5'-phosphosulfate + diphosphate. Its pathway is sulfur metabolism; hydrogen sulfide biosynthesis; sulfite from sulfate: step 1/3. Its function is as follows. With CysD forms the ATP sulfurylase (ATPS) that catalyzes the adenylation of sulfate producing adenosine 5'-phosphosulfate (APS) and diphosphate, the first enzymatic step in sulfur assimilation pathway. APS synthesis involves the formation of a high-energy phosphoric-sulfuric acid anhydride bond driven by GTP hydrolysis by CysN coupled to ATP hydrolysis by CysD. This is Sulfate adenylyltransferase subunit 1 from Salmonella paratyphi B (strain ATCC BAA-1250 / SPB7).